The sequence spans 477 residues: UDP-N-acetylmuramate--L-alanine ligase (477 aa).

G122 to T128 contacts ATP.

The protein belongs to the MurCDEF family.

It is found in the cytoplasm. The catalysed reaction is UDP-N-acetyl-alpha-D-muramate + L-alanine + ATP = UDP-N-acetyl-alpha-D-muramoyl-L-alanine + ADP + phosphate + H(+). It participates in cell wall biogenesis; peptidoglycan biosynthesis. Its function is as follows. Cell wall formation. This Xanthomonas campestris pv. campestris (strain 8004) protein is UDP-N-acetylmuramate--L-alanine ligase.